A 43-amino-acid chain; its full sequence is Cytochrome b559 subunit beta (43 aa).

Residues 18–34 (WLSVHALGIPTIFFLGA) traverse the membrane as a helical segment. His22 serves as a coordination point for heme.

The protein belongs to the PsbE/PsbF family. Heterodimer of an alpha subunit and a beta subunit. PSII is composed of 1 copy each of membrane proteins PsbA, PsbB, PsbC, PsbD, PsbE, PsbF, PsbH, PsbI, PsbJ, PsbK, PsbL, PsbM, PsbT, PsbX, PsbY, PsbZ, Psb30/Ycf12, at least 3 peripheral proteins of the oxygen-evolving complex and a large number of cofactors. It forms dimeric complexes. Heme b is required as a cofactor.

It is found in the plastid. The protein resides in the chloroplast thylakoid membrane. In terms of biological role, this b-type cytochrome is tightly associated with the reaction center of photosystem II (PSII). PSII is a light-driven water:plastoquinone oxidoreductase that uses light energy to abstract electrons from H(2)O, generating O(2) and a proton gradient subsequently used for ATP formation. It consists of a core antenna complex that captures photons, and an electron transfer chain that converts photonic excitation into a charge separation. The chain is Cytochrome b559 subunit beta from Stigeoclonium helveticum (Green alga).